The primary structure comprises 452 residues: tRNA modification GTPase MnmE (452 aa).

Residues Arg-24, Glu-81, and Arg-120 each coordinate (6S)-5-formyl-5,6,7,8-tetrahydrofolate. Positions 216–373 constitute a TrmE-type G domain; sequence GIKTVIVGAP…LFGAIGRWAD (158 aa). Residues 226–231, 245–251, and 270–273 each bind GTP; these read NVGKSS, SAEPGTT, and DTAG. Residues Ser-230 and Thr-251 each coordinate Mg(2+). A (6S)-5-formyl-5,6,7,8-tetrahydrofolate-binding site is contributed by Lys-452.

The protein belongs to the TRAFAC class TrmE-Era-EngA-EngB-Septin-like GTPase superfamily. TrmE GTPase family. In terms of assembly, homodimer. Heterotetramer of two MnmE and two MnmG subunits. The cofactor is K(+).

It is found in the cytoplasm. In terms of biological role, exhibits a very high intrinsic GTPase hydrolysis rate. Involved in the addition of a carboxymethylaminomethyl (cmnm) group at the wobble position (U34) of certain tRNAs, forming tRNA-cmnm(5)s(2)U34. In Opitutus terrae (strain DSM 11246 / JCM 15787 / PB90-1), this protein is tRNA modification GTPase MnmE.